The sequence spans 96 residues: UPF0235 protein Sputcn32_2690 (96 aa).

The protein belongs to the UPF0235 family.

The polypeptide is UPF0235 protein Sputcn32_2690 (Shewanella putrefaciens (strain CN-32 / ATCC BAA-453)).